A 721-amino-acid polypeptide reads, in one-letter code: Catalase-peroxidase (721 aa).

A cross-link (tryptophyl-tyrosyl-methioninium (Trp-Tyr) (with M-238)) is located at residues 89–212 (WHSAGTYRTG…LAAVQMGLIY (124 aa)). Catalysis depends on His-90, which acts as the Proton acceptor. The tryptophyl-tyrosyl-methioninium (Tyr-Met) (with W-89) cross-link spans 212-238 (YVNPEGPNGDPDPFAAAVDIRETFARM). Heme b is bound at residue His-253.

This sequence belongs to the peroxidase family. Peroxidase/catalase subfamily. Homodimer or homotetramer. The cofactor is heme b. Formation of the three residue Trp-Tyr-Met cross-link is important for the catalase, but not the peroxidase activity of the enzyme.

The enzyme catalyses H2O2 + AH2 = A + 2 H2O. The catalysed reaction is 2 H2O2 = O2 + 2 H2O. Its function is as follows. Bifunctional enzyme with both catalase and broad-spectrum peroxidase activity. The chain is Catalase-peroxidase from Shewanella baltica (strain OS155 / ATCC BAA-1091).